Consider the following 211-residue polypeptide: Ribonuclease HII (211 aa).

Positions 1-205 (MRFGVDEAGK…CDDVLAAASQ (205 aa)) constitute an RNase H type-2 domain. A divalent metal cation is bound by residues D6, E7, and D100.

It belongs to the RNase HII family. It depends on Mn(2+) as a cofactor. Requires Mg(2+) as cofactor.

Its subcellular location is the cytoplasm. It carries out the reaction Endonucleolytic cleavage to 5'-phosphomonoester.. In terms of biological role, endonuclease that specifically degrades the RNA of RNA-DNA hybrids. The polypeptide is Ribonuclease HII (Haloarcula marismortui (strain ATCC 43049 / DSM 3752 / JCM 8966 / VKM B-1809) (Halobacterium marismortui)).